A 254-amino-acid chain; its full sequence is Pyridoxine 5'-phosphate synthase (254 aa).

Asparagine 12 is a binding site for 3-amino-2-oxopropyl phosphate. Residue 14-15 coordinates 1-deoxy-D-xylulose 5-phosphate; it reads DH. Arginine 23 serves as a coordination point for 3-amino-2-oxopropyl phosphate. Catalysis depends on histidine 48, which acts as the Proton acceptor. Residues arginine 50 and histidine 55 each contribute to the 1-deoxy-D-xylulose 5-phosphate site. The active-site Proton acceptor is glutamate 75. Threonine 105 provides a ligand contact to 1-deoxy-D-xylulose 5-phosphate. Residue histidine 199 is the Proton donor of the active site. Residues glycine 200 and 221 to 222 each bind 3-amino-2-oxopropyl phosphate; that span reads GF.

Belongs to the PNP synthase family. As to quaternary structure, homooctamer; tetramer of dimers.

It is found in the cytoplasm. It carries out the reaction 3-amino-2-oxopropyl phosphate + 1-deoxy-D-xylulose 5-phosphate = pyridoxine 5'-phosphate + phosphate + 2 H2O + H(+). Its pathway is cofactor biosynthesis; pyridoxine 5'-phosphate biosynthesis; pyridoxine 5'-phosphate from D-erythrose 4-phosphate: step 5/5. In terms of biological role, catalyzes the complicated ring closure reaction between the two acyclic compounds 1-deoxy-D-xylulose-5-phosphate (DXP) and 3-amino-2-oxopropyl phosphate (1-amino-acetone-3-phosphate or AAP) to form pyridoxine 5'-phosphate (PNP) and inorganic phosphate. This is Pyridoxine 5'-phosphate synthase from Rhodopseudomonas palustris (strain HaA2).